Reading from the N-terminus, the 783-residue chain is Endonuclease MutS2 (783 aa).

Position 328-335 (328-335 (GPNTGGKT)) interacts with ATP. The Smr domain occupies 708–783 (LDLRGKRYEE…GSGCTIATLG (76 aa)).

It belongs to the DNA mismatch repair MutS family. MutS2 subfamily. In terms of assembly, homodimer. Binds to stalled ribosomes, contacting rRNA.

Its function is as follows. Endonuclease that is involved in the suppression of homologous recombination and thus may have a key role in the control of bacterial genetic diversity. Functionally, acts as a ribosome collision sensor, splitting the ribosome into its 2 subunits. Detects stalled/collided 70S ribosomes which it binds and splits by an ATP-hydrolysis driven conformational change. Acts upstream of the ribosome quality control system (RQC), a ribosome-associated complex that mediates the extraction of incompletely synthesized nascent chains from stalled ribosomes and their subsequent degradation. Probably generates substrates for RQC. This Streptococcus thermophilus (strain ATCC BAA-491 / LMD-9) protein is Endonuclease MutS2.